The following is a 127-amino-acid chain: Large ribosomal subunit protein eL22x (127 aa).

Belongs to the eukaryotic ribosomal protein eL22 family.

The polypeptide is Large ribosomal subunit protein eL22x (RPL22A) (Arabidopsis thaliana (Mouse-ear cress)).